We begin with the raw amino-acid sequence, 244 residues long: Probable transcriptional regulatory protein Xfasm12_1059 (244 aa).

This sequence belongs to the TACO1 family.

It is found in the cytoplasm. The chain is Probable transcriptional regulatory protein Xfasm12_1059 from Xylella fastidiosa (strain M12).